The sequence spans 131 residues: Ribosome-binding factor A (131 aa).

The protein belongs to the RbfA family. In terms of assembly, monomer. Binds 30S ribosomal subunits, but not 50S ribosomal subunits or 70S ribosomes.

The protein resides in the cytoplasm. Its function is as follows. One of several proteins that assist in the late maturation steps of the functional core of the 30S ribosomal subunit. Associates with free 30S ribosomal subunits (but not with 30S subunits that are part of 70S ribosomes or polysomes). Required for efficient processing of 16S rRNA. May interact with the 5'-terminal helix region of 16S rRNA. The polypeptide is Ribosome-binding factor A (Christiangramia forsetii (strain DSM 17595 / CGMCC 1.15422 / KT0803) (Gramella forsetii)).